A 476-amino-acid polypeptide reads, in one-letter code: Bifunctional protein HldE (476 aa).

The ribokinase stretch occupies residues 1–319; the sequence is MKVSLPAFEK…EALALHHGES (319 aa). Position 195–198 (195–198) interacts with ATP; it reads NMSE. The active site involves D264. Positions 345–476 are cytidylyltransferase; sequence MTNGCFDILH…AIIQNIMAKQ (132 aa).

It in the N-terminal section; belongs to the carbohydrate kinase PfkB family. In the C-terminal section; belongs to the cytidylyltransferase family. In terms of assembly, homodimer.

It catalyses the reaction D-glycero-beta-D-manno-heptose 7-phosphate + ATP = D-glycero-beta-D-manno-heptose 1,7-bisphosphate + ADP + H(+). The enzyme catalyses D-glycero-beta-D-manno-heptose 1-phosphate + ATP + H(+) = ADP-D-glycero-beta-D-manno-heptose + diphosphate. It participates in nucleotide-sugar biosynthesis; ADP-L-glycero-beta-D-manno-heptose biosynthesis; ADP-L-glycero-beta-D-manno-heptose from D-glycero-beta-D-manno-heptose 7-phosphate: step 1/4. Its pathway is nucleotide-sugar biosynthesis; ADP-L-glycero-beta-D-manno-heptose biosynthesis; ADP-L-glycero-beta-D-manno-heptose from D-glycero-beta-D-manno-heptose 7-phosphate: step 3/4. Its function is as follows. Catalyzes the phosphorylation of D-glycero-D-manno-heptose 7-phosphate at the C-1 position to selectively form D-glycero-beta-D-manno-heptose-1,7-bisphosphate. Functionally, catalyzes the ADP transfer from ATP to D-glycero-beta-D-manno-heptose 1-phosphate, yielding ADP-D-glycero-beta-D-manno-heptose. The protein is Bifunctional protein HldE of Shewanella sp. (strain MR-4).